A 369-amino-acid polypeptide reads, in one-letter code: p21-activated protein kinase-interacting protein 1-like (369 aa).

WD repeat units lie at residues 33-70 (AHTA…EHGA), 73-111 (QHNG…CLKS), 114-153 (AHKG…SAFI), 195-233 (TIEK…CLCE), and 236-278 (AREN…NNVP). The segment at 311–369 (ATSTEANESEKPSAVKKKKVCGMNKSGKLTKQRRRIVPAKRKLEAPLQKKKKKKQNSSE) is disordered. Composition is skewed to basic residues over residues 338–350 (KLTK…VPAK) and 358–369 (QKKKKKKQNSSE).

It is found in the nucleus. The protein localises to the nucleolus. In terms of biological role, negatively regulates the PAK1 kinase. PAK1 is a member of the PAK kinase family, which has been shown to play a positive role in the regulation of signaling pathways involving MAPK8 and RELA. PAK1 exists as an inactive homodimer, which is activated by binding of small GTPases such as CDC42 to an N-terminal regulatory domain. PAK1IP1 also binds to the N-terminus of PAK1, and inhibits the specific activation of PAK1 by CDC42. May be involved in ribosomal large subunit assembly. In Gallus gallus (Chicken), this protein is p21-activated protein kinase-interacting protein 1-like (PAK1IP1).